The chain runs to 123 residues: Large ribosomal subunit protein uL22 (123 aa).

The protein belongs to the universal ribosomal protein uL22 family. As to quaternary structure, part of the 50S ribosomal subunit.

Functionally, this protein binds specifically to 23S rRNA; its binding is stimulated by other ribosomal proteins, e.g. L4, L17, and L20. It is important during the early stages of 50S assembly. It makes multiple contacts with different domains of the 23S rRNA in the assembled 50S subunit and ribosome. In terms of biological role, the globular domain of the protein is located near the polypeptide exit tunnel on the outside of the subunit, while an extended beta-hairpin is found that lines the wall of the exit tunnel in the center of the 70S ribosome. This is Large ribosomal subunit protein uL22 from Synechococcus sp. (strain JA-3-3Ab) (Cyanobacteria bacterium Yellowstone A-Prime).